Consider the following 152-residue polypeptide: Protein-export protein SecB (152 aa).

The protein belongs to the SecB family. In terms of assembly, homotetramer, a dimer of dimers. One homotetramer interacts with 1 SecA dimer.

It localises to the cytoplasm. Its function is as follows. One of the proteins required for the normal export of preproteins out of the cell cytoplasm. It is a molecular chaperone that binds to a subset of precursor proteins, maintaining them in a translocation-competent state. It also specifically binds to its receptor SecA. The protein is Protein-export protein SecB of Rickettsia rickettsii (strain Iowa).